We begin with the raw amino-acid sequence, 179 residues long: Large ribosomal subunit protein uL5 (179 aa).

Belongs to the universal ribosomal protein uL5 family. In terms of assembly, part of the 50S ribosomal subunit; part of the 5S rRNA/L5/L18/L25 subcomplex. Contacts the 5S rRNA and the P site tRNA. Forms a bridge to the 30S subunit in the 70S ribosome.

Its function is as follows. This is one of the proteins that bind and probably mediate the attachment of the 5S RNA into the large ribosomal subunit, where it forms part of the central protuberance. In the 70S ribosome it contacts protein S13 of the 30S subunit (bridge B1b), connecting the 2 subunits; this bridge is implicated in subunit movement. Contacts the P site tRNA; the 5S rRNA and some of its associated proteins might help stabilize positioning of ribosome-bound tRNAs. In Erwinia tasmaniensis (strain DSM 17950 / CFBP 7177 / CIP 109463 / NCPPB 4357 / Et1/99), this protein is Large ribosomal subunit protein uL5.